We begin with the raw amino-acid sequence, 463 residues long: Argininosuccinate lyase (463 aa).

The protein belongs to the lyase 1 family. Argininosuccinate lyase subfamily.

The protein resides in the cytoplasm. It catalyses the reaction 2-(N(omega)-L-arginino)succinate = fumarate + L-arginine. It functions in the pathway amino-acid biosynthesis; L-arginine biosynthesis; L-arginine from L-ornithine and carbamoyl phosphate: step 3/3. The sequence is that of Argininosuccinate lyase from Thiobacillus denitrificans (strain ATCC 25259 / T1).